The chain runs to 435 residues: Xylose isomerase (435 aa).

Catalysis depends on residues histidine 100 and aspartate 103. Mg(2+) contacts are provided by glutamate 231, glutamate 267, histidine 270, aspartate 295, aspartate 306, aspartate 308, and aspartate 338.

It belongs to the xylose isomerase family. Homotetramer. Mg(2+) is required as a cofactor.

The protein localises to the cytoplasm. The catalysed reaction is alpha-D-xylose = alpha-D-xylulofuranose. This is Xylose isomerase from Brucella ovis (strain ATCC 25840 / 63/290 / NCTC 10512).